A 64-amino-acid polypeptide reads, in one-letter code: Beta-defensin 1 (64 aa).

An N-terminal signal peptide occupies residues 1 to 22 (MRLHHLLLVLFFVVLSAGSGFT). Intrachain disulfides connect cysteine 31–cysteine 60, cysteine 38–cysteine 53, and cysteine 43–cysteine 61.

It belongs to the beta-defensin family. In terms of assembly, monomer. Homodimer.

The protein localises to the secreted. The protein resides in the membrane. Functionally, has bactericidal activity. May act as a ligand for C-C chemokine receptor CCR6. Positively regulates the sperm motility and bactericidal activity in a CCR6-dependent manner. Binds to CCR6 and triggers Ca2+ mobilization in the sperm which is important for its motility. The chain is Beta-defensin 1 (DEFB1) from Ovis aries (Sheep).